Reading from the N-terminus, the 329-residue chain is MPSPMISTDVCQDILGKQKEAVDFFFQAFQPKEAMQLAEKILGHSGWVFFSGVGKSGCVARKLVATLQSLSERALFFSPVDLLHGDLGLVSPGDIVCLFSKSGETQELLDTVPHLKSRRAILVAITSMPYSNLAALSDLVVILPSVAELDPFNLIPTNSTTCQMIFGDFLAMLLFHSRGVSLSTYGKNHPSGQVGMKANGKVKDFMFPKTEVPFCHLGDKVSFSLEVFSAYGCGCVCIVDPQFRLMGIFTDGDLRRSLASYGGEVLSLSLEKVMTANPRCITEDSDIAIALQLMESSSPVAVLPVLDNEENRHVTGLLHMHTLAKAGLL.

One can recognise an SIS domain in the interval Leu37–Val180. Position 52–57 (Gly52–Gly57) interacts with ATP. CBS domains follow at residues Met206 to Val265 and Met274 to Leu329.

Belongs to the SIS family. GutQ/KpsF subfamily.

This is an uncharacterized protein from Chlamydia pneumoniae (Chlamydophila pneumoniae).